The sequence spans 763 residues: Phosphoglycerol transferase I (763 aa).

4 consecutive transmembrane segments (helical) span residues 1–21 (MSEL…AWKA), 26–46 (WWFA…ITLY), 77–97 (ILPG…LGWI), and 108–128 (VGYS…SPAF).

The protein belongs to the OpgB family.

The protein localises to the cell inner membrane. The enzyme catalyses a phosphatidylglycerol + a membrane-derived-oligosaccharide D-glucose = a 1,2-diacyl-sn-glycerol + a membrane-derived-oligosaccharide 6-(glycerophospho)-D-glucose.. The protein operates within glycan metabolism; osmoregulated periplasmic glucan (OPG) biosynthesis. Its function is as follows. Transfers a phosphoglycerol residue from phosphatidylglycerol to the membrane-bound nascent glucan backbones. This Salmonella agona (strain SL483) protein is Phosphoglycerol transferase I.